A 245-amino-acid chain; its full sequence is 1-(5-phosphoribosyl)-5-[(5-phosphoribosylamino)methylideneamino] imidazole-4-carboxamide isomerase (245 aa).

The Proton acceptor role is filled by aspartate 11. Aspartate 132 functions as the Proton donor in the catalytic mechanism.

This sequence belongs to the HisA/HisF family.

It is found in the cytoplasm. The enzyme catalyses 1-(5-phospho-beta-D-ribosyl)-5-[(5-phospho-beta-D-ribosylamino)methylideneamino]imidazole-4-carboxamide = 5-[(5-phospho-1-deoxy-D-ribulos-1-ylimino)methylamino]-1-(5-phospho-beta-D-ribosyl)imidazole-4-carboxamide. It functions in the pathway amino-acid biosynthesis; L-histidine biosynthesis; L-histidine from 5-phospho-alpha-D-ribose 1-diphosphate: step 4/9. The protein is 1-(5-phosphoribosyl)-5-[(5-phosphoribosylamino)methylideneamino] imidazole-4-carboxamide isomerase of Geobacillus thermodenitrificans (strain NG80-2).